The sequence spans 166 residues: 3-isopropylmalate dehydratase small subunit (166 aa).

The protein belongs to the LeuD family. LeuD type 2 subfamily. Heterodimer of LeuC and LeuD.

It carries out the reaction (2R,3S)-3-isopropylmalate = (2S)-2-isopropylmalate. It participates in amino-acid biosynthesis; L-leucine biosynthesis; L-leucine from 3-methyl-2-oxobutanoate: step 2/4. Functionally, catalyzes the isomerization between 2-isopropylmalate and 3-isopropylmalate, via the formation of 2-isopropylmaleate. This Heliobacterium modesticaldum (strain ATCC 51547 / Ice1) protein is 3-isopropylmalate dehydratase small subunit.